The sequence spans 868 residues: Probable inorganic carbon transporter subunit DabA (868 aa).

Residues Cys392, Asp394, His574, and Cys589 each contribute to the Zn(2+) site.

The protein belongs to the inorganic carbon transporter (TC 9.A.2) DabA family. As to quaternary structure, forms a complex with DabB. Zn(2+) serves as cofactor.

It is found in the cell membrane. Its function is as follows. Part of an energy-coupled inorganic carbon pump. The sequence is that of Probable inorganic carbon transporter subunit DabA from Bacillus cereus (strain G9842).